We begin with the raw amino-acid sequence, 162 residues long: UPF0114 protein PSEEN0819 (162 aa).

The next 3 membrane-spanning stretches (helical) occupy residues 15–35 (LLAPIYFGLSLGLLALALKFF), 53–73 (LVLVILSLIDMSLVGGLLVMV), and 136–156 (LMWYVIIHMTFVVSAFVMGYL).

This sequence belongs to the UPF0114 family.

Its subcellular location is the cell membrane. The chain is UPF0114 protein PSEEN0819 from Pseudomonas entomophila (strain L48).